Here is a 129-residue protein sequence, read N- to C-terminus: Small ribosomal subunit protein uS11 (129 aa).

This sequence belongs to the universal ribosomal protein uS11 family. As to quaternary structure, part of the 30S ribosomal subunit. Interacts with proteins S7 and S18. Binds to IF-3.

Located on the platform of the 30S subunit, it bridges several disparate RNA helices of the 16S rRNA. Forms part of the Shine-Dalgarno cleft in the 70S ribosome. The polypeptide is Small ribosomal subunit protein uS11 (Rhizorhabdus wittichii (strain DSM 6014 / CCUG 31198 / JCM 15750 / NBRC 105917 / EY 4224 / RW1) (Sphingomonas wittichii)).